We begin with the raw amino-acid sequence, 587 residues long: Trihelix transcription factor GTL1 (587 aa).

Composition is skewed to gly residues over residues 1-10 (MEQGGGGGGN) and 41-54 (GGLG…GGGS). The tract at residues 1-63 (MEQGGGGGGN…SASSSSGNRW (63 aa)) is disordered. One can recognise a Myb-like 1 domain in the interval 55–119 (ASSSSGNRWP…KCKEKFENVQ (65 aa)). The Nuclear localization signal 1 signature appears at 96-103 (SRKLLELG). Residues 173-194 (SSSPFPVFSQPQPQTQTQPPQT) show a composition bias toward low complexity. The tract at residues 173–264 (SSSPFPVFSQ…RKRGNRGGGG (92 aa)) is disordered. The span at 201-210 (PTPPPLPLPS) shows a compositional bias: pro residues. The segment covering 221 to 232 (SSHSSSTASGMG) has biased composition (low complexity). The span at 233–242 (SDDDDDDMDV) shows a compositional bias: acidic residues. Positions 285 to 328 (QRSFLEALEKREQERLDREEAWKRQEMARLAREHEVMSQERAAS) form a coiled coil. Residues 348 to 435 (QLPPSLSSQP…EQSSLPSSSR (88 aa)) are disordered. The segment covering 356–366 (QPPPPYQPPPA) has biased composition (pro residues). Low complexity-rich tracts occupy residues 379–395 (AQSQ…QQQI) and 411–434 (QKQQ…PSSS). The region spanning 434–492 (SRWPKAEILALINLRSGMEPRYQDNVPKGLLWEEISTSMKRMGYNRNAKRCKEKWENIN) is the Myb-like 2 domain. Positions 472–479 (MKRMGYNR) match the Nuclear localization signal 2 motif. The disordered stretch occupies residues 530–587 (GGGSSTSGLPQDQKQSPVTAMKPPQEGLVNVQQTHGSASTEEEEPIEESPQGTEKKTL). 2 stretches are compositionally biased toward polar residues: residues 538-547 (LPQDQKQSPV) and 559-568 (NVQQTHGSAS).

Mostly expressed in siliques, and, to a lower extent, in growing root hairs, leaves, stems, and flowers. Present in abaxial epidermal cells, predominantly in guard cells, pavement cells, and meristemoids.

The protein resides in the nucleus. In terms of biological role, transcription repressor that binds specific DNA sequence such as GT3 box 5'-GGTAAA-3' in the SDD1 promoter. Negative regulator of water use efficiency (WUE) via the promotion of stomatal density and distribution by the transcription repression of SDD1. Regulates the expression of several cell cycle genes and endoreduplication, especially in trichomes where it prevents ploidy-dependent plant cell growth. Regulates negatively root hair growth by directly binding RSL4 promoter and repressing RSL4 expression. In Arabidopsis thaliana (Mouse-ear cress), this protein is Trihelix transcription factor GTL1.